The following is a 138-amino-acid chain: Small ribosomal subunit protein bS16 (138 aa).

The segment at 92–138 (QAAKREADAKQAAKEAAEAKAAAEAEAKAAAEAESADAGAEEAPAEA) is disordered. A compositionally biased stretch (basic and acidic residues) spans 94-122 (AKREADAKQAAKEAAEAKAAAEAEAKAAA).

This sequence belongs to the bacterial ribosomal protein bS16 family.

The chain is Small ribosomal subunit protein bS16 from Synechococcus sp. (strain WH7803).